Reading from the N-terminus, the 121-residue chain is ATP synthase epsilon chain (121 aa).

It belongs to the ATPase epsilon chain family. As to quaternary structure, F-type ATPases have 2 components, CF(1) - the catalytic core - and CF(0) - the membrane proton channel. CF(1) has five subunits: alpha(3), beta(3), gamma(1), delta(1), epsilon(1). CF(0) has three main subunits: a, b and c.

It localises to the cell membrane. In terms of biological role, produces ATP from ADP in the presence of a proton gradient across the membrane. The chain is ATP synthase epsilon chain from Mycolicibacterium vanbaalenii (strain DSM 7251 / JCM 13017 / BCRC 16820 / KCTC 9966 / NRRL B-24157 / PYR-1) (Mycobacterium vanbaalenii).